Reading from the N-terminus, the 509-residue chain is ATP synthase subunit alpha (509 aa).

An ATP-binding site is contributed by 169 to 176; the sequence is GDRQTGKT.

The protein belongs to the ATPase alpha/beta chains family. F-type ATPases have 2 components, CF(1) - the catalytic core - and CF(0) - the membrane proton channel. CF(1) has five subunits: alpha(3), beta(3), gamma(1), delta(1), epsilon(1). CF(0) has three main subunits: a(1), b(2) and c(9-12). The alpha and beta chains form an alternating ring which encloses part of the gamma chain. CF(1) is attached to CF(0) by a central stalk formed by the gamma and epsilon chains, while a peripheral stalk is formed by the delta and b chains.

It is found in the cell inner membrane. It carries out the reaction ATP + H2O + 4 H(+)(in) = ADP + phosphate + 5 H(+)(out). Its function is as follows. Produces ATP from ADP in the presence of a proton gradient across the membrane. The alpha chain is a regulatory subunit. This Brucella melitensis biotype 1 (strain ATCC 23456 / CCUG 17765 / NCTC 10094 / 16M) protein is ATP synthase subunit alpha.